The following is a 156-amino-acid chain: Ribosomal RNA large subunit methyltransferase H (156 aa).

Residues Leu72, Gly104, and 123–128 (LSKMTL) contribute to the S-adenosyl-L-methionine site.

Belongs to the RNA methyltransferase RlmH family. Homodimer.

It is found in the cytoplasm. The catalysed reaction is pseudouridine(1915) in 23S rRNA + S-adenosyl-L-methionine = N(3)-methylpseudouridine(1915) in 23S rRNA + S-adenosyl-L-homocysteine + H(+). Functionally, specifically methylates the pseudouridine at position 1915 (m3Psi1915) in 23S rRNA. This Maridesulfovibrio salexigens (strain ATCC 14822 / DSM 2638 / NCIMB 8403 / VKM B-1763) (Desulfovibrio salexigens) protein is Ribosomal RNA large subunit methyltransferase H.